The sequence spans 280 residues: Bifunctional protein FolD (280 aa).

Residues 158 to 160 (GES), isoleucine 183, and isoleucine 222 contribute to the NADP(+) site.

Belongs to the tetrahydrofolate dehydrogenase/cyclohydrolase family. In terms of assembly, homodimer.

It catalyses the reaction (6R)-5,10-methylene-5,6,7,8-tetrahydrofolate + NADP(+) = (6R)-5,10-methenyltetrahydrofolate + NADPH. The enzyme catalyses (6R)-5,10-methenyltetrahydrofolate + H2O = (6R)-10-formyltetrahydrofolate + H(+). It functions in the pathway one-carbon metabolism; tetrahydrofolate interconversion. In terms of biological role, catalyzes the oxidation of 5,10-methylenetetrahydrofolate to 5,10-methenyltetrahydrofolate and then the hydrolysis of 5,10-methenyltetrahydrofolate to 10-formyltetrahydrofolate. This is Bifunctional protein FolD from Mycoplasma mobile (strain ATCC 43663 / 163K / NCTC 11711) (Mesomycoplasma mobile).